Reading from the N-terminus, the 472-residue chain is Ribulose bisphosphate carboxylase large chain 1 (472 aa).

Residues Asn115 and Thr165 each contribute to the substrate site. The active-site Proton acceptor is Lys167. Lys169 provides a ligand contact to substrate. Lys193, Asp195, and Glu196 together coordinate Mg(2+). Lys193 is subject to N6-carboxylysine. His286 functions as the Proton acceptor in the catalytic mechanism. 3 residues coordinate substrate: Arg287, His319, and Ser371.

The protein belongs to the RuBisCO large chain family. Type I subfamily. Heterohexadecamer of 8 large chains and 8 small chains. It depends on Mg(2+) as a cofactor.

The enzyme catalyses 2 (2R)-3-phosphoglycerate + 2 H(+) = D-ribulose 1,5-bisphosphate + CO2 + H2O. It catalyses the reaction D-ribulose 1,5-bisphosphate + O2 = 2-phosphoglycolate + (2R)-3-phosphoglycerate + 2 H(+). In terms of biological role, ruBisCO catalyzes two reactions: the carboxylation of D-ribulose 1,5-bisphosphate, the primary event in carbon dioxide fixation, as well as the oxidative fragmentation of the pentose substrate. Both reactions occur simultaneously and in competition at the same active site. This chain is Ribulose bisphosphate carboxylase large chain 1, found in Allochromatium vinosum (strain ATCC 17899 / DSM 180 / NBRC 103801 / NCIMB 10441 / D) (Chromatium vinosum).